A 239-amino-acid chain; its full sequence is MADS-box transcription factor 34 (239 aa).

An MADS-box domain is found at 1–61 (MGRGKVVLQR…GRLYQFSSSS (61 aa)). Residues 88 to 178 (MQNNYQEYVN…KRKLDEIDVE (91 aa)) enclose the K-box domain. The segment at 179 to 208 (AAPPQPPWNGNCSNGHGGGGGVFSSEPPQP) is disordered.

Highly expressed in leaves and at low levels in roots and spikelets (rice flower).

The protein localises to the nucleus. Its function is as follows. Probable transcription factor. The polypeptide is MADS-box transcription factor 34 (MADS34) (Oryza sativa subsp. japonica (Rice)).